The following is a 961-amino-acid chain: Vitamin B12-dependent ribonucleotide reductase (961 aa).

The tract at residues 1–23 is disordered; that stretch reads MTETTSGPARGSRTKGTKATKGL. Substrate is bound by residues Ser143, 159 to 160, Gly188, 364 to 368, and 554 to 558; these read AC, NPCSE, and PTGTI. A disulfide bridge connects residues Cys160 and Cys377. Residue Asn364 is the Proton acceptor of the active site. The Cysteine radical intermediate role is filled by Cys366. The active-site Proton acceptor is Glu368.

The protein belongs to the ribonucleoside diphosphate reductase class-2 family. Homotetramer. Requires adenosylcob(III)alamin as cofactor.

The enzyme catalyses a 2'-deoxyribonucleoside 5'-diphosphate + [thioredoxin]-disulfide + H2O = a ribonucleoside 5'-diphosphate + [thioredoxin]-dithiol. Its function is as follows. Catalyzes the reduction of ribonucleotides to deoxyribonucleotides. May function to provide a pool of deoxyribonucleotide precursors for DNA repair during oxygen limitation and/or for immediate growth after restoration of oxygen. The chain is Vitamin B12-dependent ribonucleotide reductase (nrdJ) from Streptomyces clavuligerus.